Here is a 345-residue protein sequence, read N- to C-terminus: Large ribosomal subunit protein uL10 (345 aa).

The disordered stretch occupies residues 303 to 345; sequence SLPQTAAPQQTPQPTEAPKEEAQEEKKEGPSEEEIAGSLASLF. Residues 305–318 are compositionally biased toward low complexity; it reads PQTAAPQQTPQPTE. Residues 319 to 332 are compositionally biased toward basic and acidic residues; the sequence is APKEEAQEEKKEGP.

Belongs to the universal ribosomal protein uL10 family. As to quaternary structure, part of the 50S ribosomal subunit. Forms part of the ribosomal stalk which helps the ribosome interact with GTP-bound translation factors. Forms a heptameric L10(L12)2(L12)2(L12)2 complex, where L10 forms an elongated spine to which the L12 dimers bind in a sequential fashion.

In terms of biological role, forms part of the ribosomal stalk, playing a central role in the interaction of the ribosome with GTP-bound translation factors. The protein is Large ribosomal subunit protein uL10 of Pyrobaculum aerophilum (strain ATCC 51768 / DSM 7523 / JCM 9630 / CIP 104966 / NBRC 100827 / IM2).